The following is a 511-amino-acid chain: ATP synthase subunit alpha (511 aa).

169-176 (GDRQTGKT) is a binding site for ATP.

This sequence belongs to the ATPase alpha/beta chains family. In terms of assembly, F-type ATPases have 2 components, CF(1) - the catalytic core - and CF(0) - the membrane proton channel. CF(1) has five subunits: alpha(3), beta(3), gamma(1), delta(1), epsilon(1). CF(0) has three main subunits: a(1), b(2) and c(9-12). The alpha and beta chains form an alternating ring which encloses part of the gamma chain. CF(1) is attached to CF(0) by a central stalk formed by the gamma and epsilon chains, while a peripheral stalk is formed by the delta and b chains.

The protein localises to the cell inner membrane. The catalysed reaction is ATP + H2O + 4 H(+)(in) = ADP + phosphate + 5 H(+)(out). Functionally, produces ATP from ADP in the presence of a proton gradient across the membrane. The alpha chain is a regulatory subunit. This Janthinobacterium sp. (strain Marseille) (Minibacterium massiliensis) protein is ATP synthase subunit alpha.